Reading from the N-terminus, the 379-residue chain is Cytochrome b (379 aa).

The next 4 helical transmembrane spans lie at Y34–M54, W78–G100, T113–V133, and F179–L199. Positions 84 and 98 each coordinate heme b. 2 residues coordinate heme b: H183 and H197. H202 provides a ligand contact to a ubiquinone. The next 4 membrane-spanning stretches (helical) occupy residues F225 to L245, L289 to S309, W320 to A340, and A345 to M365.

It belongs to the cytochrome b family. The main subunits of complex b-c1 are: cytochrome b, cytochrome c1 and the Rieske protein. Heme b serves as cofactor.

It localises to the mitochondrion inner membrane. In terms of biological role, component of the ubiquinol-cytochrome c reductase complex (complex III or cytochrome b-c1 complex) that is part of the mitochondrial respiratory chain. The b-c1 complex mediates electron transfer from ubiquinol to cytochrome c. Contributes to the generation of a proton gradient across the mitochondrial membrane that is then used for ATP synthesis. This is Cytochrome b (mt:Cyt-b) from Epiperipatus biolleyi (Velvet worm).